The sequence spans 337 residues: Ketol-acid reductoisomerase (NADP(+)) (337 aa).

The KARI N-terminal Rossmann domain occupies 3–183 (LEMFYDDDAD…GGTRAGVIKT (181 aa)). NADP(+) contacts are provided by residues 26–29 (YGSQ), K49, S52, S54, and 84–87 (DTAQ). H109 is an active-site residue. Residue G135 coordinates NADP(+). One can recognise a KARI C-terminal knotted domain in the interval 184–329 (TFKDETETDL…KKLRDLMSWV (146 aa)). The Mg(2+) site is built by D192, E196, E228, and E232. S253 contributes to the substrate binding site.

Belongs to the ketol-acid reductoisomerase family. It depends on Mg(2+) as a cofactor.

The enzyme catalyses (2R)-2,3-dihydroxy-3-methylbutanoate + NADP(+) = (2S)-2-acetolactate + NADPH + H(+). It carries out the reaction (2R,3R)-2,3-dihydroxy-3-methylpentanoate + NADP(+) = (S)-2-ethyl-2-hydroxy-3-oxobutanoate + NADPH + H(+). It participates in amino-acid biosynthesis; L-isoleucine biosynthesis; L-isoleucine from 2-oxobutanoate: step 2/4. Its pathway is amino-acid biosynthesis; L-valine biosynthesis; L-valine from pyruvate: step 2/4. In terms of biological role, involved in the biosynthesis of branched-chain amino acids (BCAA). Catalyzes an alkyl-migration followed by a ketol-acid reduction of (S)-2-acetolactate (S2AL) to yield (R)-2,3-dihydroxy-isovalerate. In the isomerase reaction, S2AL is rearranged via a Mg-dependent methyl migration to produce 3-hydroxy-3-methyl-2-ketobutyrate (HMKB). In the reductase reaction, this 2-ketoacid undergoes a metal-dependent reduction by NADPH to yield (R)-2,3-dihydroxy-isovalerate. The protein is Ketol-acid reductoisomerase (NADP(+)) of Mycobacterium bovis (strain BCG / Pasteur 1173P2).